Reading from the N-terminus, the 260-residue chain is Homeobox-leucine zipper protein HOX25 (260 aa).

A compositionally biased stretch (acidic residues) spans 1–10 (MEDLVDELYG). 3 disordered regions span residues 1-24 (MEDL…ARKR), 121-145 (ANGK…PESA), and 190-221 (SPES…YPSS). Residues 19 to 79 (AAARKRRLTA…NRRARWKTKQ (61 aa)) constitute a DNA-binding region (homeobox). The leucine-zipper stretch occupies residues 78 to 122 (KQLELDFDRLRAAHDELLAGRAALAADNESLRSQVILLTEKLQAN). A compositionally biased stretch (acidic residues) spans 205–218 (SEDDCGGAGSDDDY).

This sequence belongs to the HD-ZIP homeobox family. Class I subfamily. Expressed in roots, leaf sheaths and blades and panicles.

It is found in the nucleus. Functionally, probable transcription factor. The polypeptide is Homeobox-leucine zipper protein HOX25 (HOX25) (Oryza sativa subsp. indica (Rice)).